The chain runs to 1126 residues: Probable serine/threonine-protein kinase DDB_G0280111 (1126 aa).

The Protein kinase domain maps to 16–295; the sequence is LNFVKQIAEG…NLLRNQQPLF (280 aa). Residues 22–30 and lysine 45 each bind ATP; that span reads IAEGGFSYV. The Proton acceptor role is filled by aspartate 147. Positions 314–333 are enriched in low complexity; it reads NNNNNINNNNNNNIVNGKNI. Disordered regions lie at residues 314–469, 760–901, 944–1072, and 1095–1126; these read NNNN…NGNN, LNLN…QQQQ, TPSS…DEVR, and NKQS…GLLN. The segment covering 347 to 364 has biased composition (pro residues); the sequence is TPTPPPPAPSQSPSPSPS. Positions 367–390 are enriched in polar residues; the sequence is VVNNIENNSNGLEHSNSNGNISQP. Composition is skewed to low complexity over residues 413–422, 432–469, and 760–795; these read PPNNSNNSFD, NLSN…NGNN, and LNLN…LNSS. Polar residues-rich tracts occupy residues 796 to 825 and 833 to 845; these read FDNI…SESG and EPTS…YQQS. Residues 846-856 show a composition bias toward low complexity; sequence NNNNNNNNNNN. The span at 857–866 shows a compositional bias: polar residues; sequence GTPISLTPGS. Composition is skewed to low complexity over residues 886–901, 953–971, and 1003–1035; these read QQQQ…QQQQ, PSTG…QQSQ, and NVNI…NPNL. Polar residues predominate over residues 1095–1105; sequence NKQSRMNNPNN. A compositionally biased stretch (acidic residues) spans 1108–1126; it reads DEGDSGFGDGEEEDEGLLN.

This sequence belongs to the protein kinase superfamily. Ser/Thr protein kinase family.

The catalysed reaction is L-seryl-[protein] + ATP = O-phospho-L-seryl-[protein] + ADP + H(+). It catalyses the reaction L-threonyl-[protein] + ATP = O-phospho-L-threonyl-[protein] + ADP + H(+). The chain is Probable serine/threonine-protein kinase DDB_G0280111 from Dictyostelium discoideum (Social amoeba).